We begin with the raw amino-acid sequence, 448 residues long: Homogentisate 1,2-dioxygenase (448 aa).

Positions 340, 346, and 377 each coordinate Fe cation.

This sequence belongs to the homogentisate dioxygenase family. The cofactor is Fe cation.

The enzyme catalyses homogentisate + O2 = 4-maleylacetoacetate + H(+). The protein operates within amino-acid degradation; L-phenylalanine degradation; acetoacetate and fumarate from L-phenylalanine: step 4/6. In Emericella nidulans (strain FGSC A4 / ATCC 38163 / CBS 112.46 / NRRL 194 / M139) (Aspergillus nidulans), this protein is Homogentisate 1,2-dioxygenase (hmgA).